Here is a 238-residue protein sequence, read N- to C-terminus: CD63 antigen (238 aa).

Over 2 to 11 the chain is Cytoplasmic; that stretch reads AVEGGMKCVK. A helical transmembrane segment spans residues 12-32; the sequence is FLLYVLLLAFCACAVGLIAIG. Over 33–51 the chain is Extracellular; it reads VAVQVVLKQAITHETTAGS. Residues 52-72 traverse the membrane as a helical segment; that stretch reads LLPVVIIAVGAFLFLVAFVGC. The Cytoplasmic portion of the chain corresponds to 73-81; sequence CGACKENYC. Residues 82 to 102 form a helical membrane-spanning segment; that stretch reads LMITFAIFLSLIMLVEVAVAI. Residues 103 to 203 are Extracellular-facing; that stretch reads AGYVFRDQVK…TIAAWLRKNV (101 aa). N-linked (GlcNAc...) asparagine glycans are attached at residues N130, N150, and N172. Residues 204-224 traverse the membrane as a helical segment; sequence LLVAGAALGIAFVEVLGIIFS. At 225–238 the chain is on the cytoplasmic side; that stretch reads CCLVKSIRSGYEVM. The short motif at 234 to 238 is the Lysosomal targeting motif element; it reads GYEVM.

The protein belongs to the tetraspanin (TM4SF) family. Interacts with TIMP1 and ITGB1 and recruits TIMP1 to ITGB1. Interacts with CD9. Identified in a complex with CD9 and ITGB3. Interacts with PMEL. Interacts with KDR/VEGFR2; identified in a complex with ITGB1 and KDR/VEGFR2 and is required to recruit KDR to ITGB1 complexes. Interacts with SYT7. Palmitoylated at a low, basal level in unstimulated platelets. The level of palmitoylation increases when platelets are activated by thrombin (in vitro). As to expression, detected in mast cells and platelets (at protein level).

The protein resides in the cell membrane. It is found in the lysosome membrane. The protein localises to the late endosome membrane. It localises to the endosome. Its subcellular location is the multivesicular body. The protein resides in the melanosome. It is found in the secreted. The protein localises to the extracellular exosome. It localises to the cell surface. Its function is as follows. Functions as a cell surface receptor for TIMP1 and plays a role in the activation of cellular signaling cascades. Plays a role in the activation of ITGB1 and integrin signaling, leading to the activation of AKT, FAK/PTK2 and MAP kinases. Promotes cell survival, reorganization of the actin cytoskeleton, cell adhesion, spreading and migration, via its role in the activation of AKT and FAK/PTK2. Plays a role in VEGFA signaling via its role in regulating the internalization of KDR/VEGFR2. Plays a role in intracellular vesicular transport processes, and is required for normal trafficking of the PMEL luminal domain that is essential for the development and maturation of melanocytes. Plays a role in the adhesion of leukocytes onto endothelial cells via its role in the regulation of SELP trafficking. May play a role in mast cell degranulation in response to Ms4a2/FceRI stimulation, but not in mast cell degranulation in response to other stimuli. In Rattus norvegicus (Rat), this protein is CD63 antigen (Cd63).